Consider the following 178-residue polypeptide: Conodipine-P3 (178 aa).

An N-terminal signal peptide occupies residues 1–24 (MKLLAPVLWAMAALGVTWLVAVDS). 4-hydroxyproline is present on Pro38. 4-hydroxyproline; partial occurs at positions 42 and 49. The active site involves His54. Positions 98-130 (KREVTSHRATSIAHSRLWKTALDQKSFLNRKAR) are cleaved as a propeptide — interchain peptide. Pyrrolidone carboxylic acid is present on Gln131. Pro137 carries the 4-hydroxyproline; partial modification.

Belongs to the phospholipase A2 family. Group IX subfamily. Heterodimer of an alpha and a beta chain; probably disulfide-linked. Ca(2+) serves as cofactor. In terms of tissue distribution, expressed by the venom duct.

It localises to the secreted. The enzyme catalyses a 1,2-diacyl-sn-glycero-3-phosphocholine + H2O = a 1-acyl-sn-glycero-3-phosphocholine + a fatty acid + H(+). Functionally, catalyzes the calcium-dependent hydrolysis of the 2-acyl groups in 3-sn-phosphoglycerides. The chain is Conodipine-P3 from Conus purpurascens (Purple cone).